The chain runs to 718 residues: ADP-ribosylation factor-binding protein GGA3 (718 aa).

In terms of domain architecture, VHS spans 16–146; sequence ATNPSNRQED…MLKRQGIVQS (131 aa). 2 positions are modified to phosphoserine: Ser-159 and Ser-275. One can recognise a GAT domain in the interval 171–298; the sequence is DEEKSKLLAR…VINSYKTIIE (128 aa). The tract at residues 299 to 588 is unstructured hinge; the sequence is GQIVNGEVTT…VHVPLESIKP (290 aa). 2 stretches are compositionally biased toward low complexity: residues 334–350 and 360–369; these read APSN…SGIP and GPPRSRSSSQ. The disordered stretch occupies residues 334–381; that stretch reads APSNSSPALAPPTSGIPILPPPPQTSGPPRSRSSSQAEAPPGSDSTNN. An Autoinhibitory motif is present at residues 387-391; sequence DEELL. Disordered stretches follow at residues 395–455 and 477–506; these read LTDP…MSQA and SFMF…STSH. The GAE domain occupies 589-710; the sequence is SSALPVTAYD…TELGEVDQFP (122 aa).

It belongs to the GGA protein family. Monomer. Interacts with GGA1 and GGA2. Binds to clathrin and activated ARFs, such as ARF1, ARF5 and ARF6. Binds RABEP1 and RABGEF1. Interacts with the membrane proteins M6PR/CD-MPR and IGF2R/CI-MPR and the accessory proteins SYNRG, EPN4, NECAP1, NECAP2 and AFTPH/aftiphilin. Interacts with TSG101 and UBC. Interacts with ADRA2B. Interacts with NTRK1; the interaction is independent of NTRK1 activation and ubiquitination. Interacts (via VHS domain) with BACE1 (via DXXLL motif). Phosphorylated by CK2 and dephosphorylated by PP2A. Phosphorylation of GGA3 allows the internal DXXLL motif to bind the VHS domain and to inhibit the recognition of cargo signals. Post-translationally, ubiquitinated. In terms of processing, proteolytically cleaved during apoptosis by CASP3.

Its subcellular location is the golgi apparatus. It is found in the trans-Golgi network membrane. It localises to the endosome membrane. The protein localises to the early endosome membrane. The protein resides in the recycling endosome membrane. In terms of biological role, plays a role in protein sorting and trafficking between the trans-Golgi network (TGN) and endosomes. Mediates the ARF-dependent recruitment of clathrin to the TGN and binds ubiquitinated proteins and membrane cargo molecules with a cytosolic acidic cluster-dileucine (DXXLL) motif. Its function is as follows. Plays a role in protein sorting and trafficking between the trans-Golgi network (TGN) and endosomes. Mediates the ARF-dependent recruitment of clathrin to the TGN and binds ubiquitinated proteins and membrane cargo molecules with a cytosolic acidic cluster-dileucine (DXXLL) motif. Mediates export of the GPCR receptor ADRA2B to the cell surface. Involved in BACE1 transport and sorting as well as regulation of BACE1 protein levels. Regulates retrograde transport of BACE1 from endosomes to the trans-Golgi network via interaction through the VHS motif and dependent of BACE1 phosphorylation. Modulates BACE1 protein levels independently of the interaction between VHS domain and DXXLL motif through recognition of ubiquitination. Key player in a novel DXXLL-mediated endosomal sorting machinery to the recycling pathway that targets NTRK1 to the plasma membrane. This is ADP-ribosylation factor-binding protein GGA3 (Gga3) from Mus musculus (Mouse).